Reading from the N-terminus, the 89-residue chain is Mu-like prophage FluMu DNA-binding protein Ner (89 aa).

The H-T-H motif DNA-binding region spans 57 to 76 (ERLVANAIGVPPEVIWAGRF).

Belongs to the ner transcriptional regulatory family.

In terms of biological role, negative regulator of transcription starting from the Pe and Pc promoters of Mu. Also negatively regulates its own gene transcription. The chain is Mu-like prophage FluMu DNA-binding protein Ner (nlp) from Haemophilus influenzae (strain ATCC 51907 / DSM 11121 / KW20 / Rd).